The chain runs to 420 residues: 3-isopropylmalate dehydratase large subunit (420 aa).

3 residues coordinate [4Fe-4S] cluster: C300, C360, and C363.

Belongs to the aconitase/IPM isomerase family. LeuC type 2 subfamily. In terms of assembly, heterodimer of LeuC and LeuD. It depends on [4Fe-4S] cluster as a cofactor.

The enzyme catalyses (2R,3S)-3-isopropylmalate = (2S)-2-isopropylmalate. The protein operates within amino-acid biosynthesis; L-leucine biosynthesis; L-leucine from 3-methyl-2-oxobutanoate: step 2/4. Catalyzes the isomerization between 2-isopropylmalate and 3-isopropylmalate, via the formation of 2-isopropylmaleate. The sequence is that of 3-isopropylmalate dehydratase large subunit from Heliobacterium modesticaldum (strain ATCC 51547 / Ice1).